The following is a 607-amino-acid chain: ATP-dependent zinc metalloprotease FtsH 2 (607 aa).

Over 1 to 2 the chain is Cytoplasmic; sequence MR. A helical transmembrane segment spans residues 3 to 23; it reads SLWIVLVLVLGSALLLQVMAA. Topologically, residues 24 to 99 are periplasmic; that stretch reads SDDRIPYARF…PYTRVADELG (76 aa). Residues 100–120 traverse the membrane as a helical segment; sequence LPPYLWLLLPLAGLAAMGHLA. Over 121-607 the chain is Cytoplasmic; sequence SRRATTAGTI…LREMVASGEA (487 aa). 195 to 202 is an ATP binding site; sequence GPPGTGKT. Position 418 (His418) interacts with Zn(2+). Glu419 is a catalytic residue. Zn(2+) contacts are provided by His422 and Asp495.

The protein in the central section; belongs to the AAA ATPase family. It in the C-terminal section; belongs to the peptidase M41 family. Homohexamer. Requires Zn(2+) as cofactor.

The protein localises to the cell inner membrane. Its function is as follows. Acts as a processive, ATP-dependent zinc metallopeptidase for both cytoplasmic and membrane proteins. Plays a role in the quality control of integral membrane proteins. This is ATP-dependent zinc metalloprotease FtsH 2 from Sorangium cellulosum (strain So ce56) (Polyangium cellulosum (strain So ce56)).